The primary structure comprises 682 residues: Potassium-transporting ATPase ATP-binding subunit (682 aa).

The next 4 helical transmembrane spans lie at 34 to 54, 62 to 82, 219 to 239, and 254 to 274; these read PVMF…IAMA, ALFS…ANFA, IALT…TATL, and VLVA…LSAI. The active-site 4-aspartylphosphate intermediate is the aspartate 307. ATP contacts are provided by residues aspartate 344, glutamate 348, 377–384, and lysine 395; that span reads FTAQSRMS. Mg(2+)-binding residues include aspartate 518 and aspartate 522. 3 helical membrane-spanning segments follow: residues 588 to 608, 616 to 636, and 656 to 676; these read FAII…LNIM, AILS…PLAL, and IYGL…DLLL.

This sequence belongs to the cation transport ATPase (P-type) (TC 3.A.3) family. Type IA subfamily. As to quaternary structure, the system is composed of three essential subunits: KdpA, KdpB and KdpC.

The protein resides in the cell inner membrane. The enzyme catalyses K(+)(out) + ATP + H2O = K(+)(in) + ADP + phosphate + H(+). Part of the high-affinity ATP-driven potassium transport (or Kdp) system, which catalyzes the hydrolysis of ATP coupled with the electrogenic transport of potassium into the cytoplasm. This subunit is responsible for energy coupling to the transport system and for the release of the potassium ions to the cytoplasm. This is Potassium-transporting ATPase ATP-binding subunit from Shigella sonnei (strain Ss046).